The sequence spans 392 residues: Xylose operon regulatory protein (392 aa).

The 99-residue stretch at 288–386 (IQAMHYIRNH…DTTPKEYRDV (99 aa)) folds into the HTH araC/xylS-type domain. 2 consecutive DNA-binding regions (H-T-H motif) follow at residues 305–326 (DQVL…KEEV) and 353–376 (INEI…KKAY).

Its function is as follows. Regulatory protein for the xylBAFGHR operon. The sequence is that of Xylose operon regulatory protein (xylR) from Escherichia coli O157:H7.